A 139-amino-acid chain; its full sequence is Aspartate 1-decarboxylase (139 aa).

The Schiff-base intermediate with substrate; via pyruvic acid role is filled by S25. Position 25 is a pyruvic acid (Ser) (S25). Position 57 (T57) interacts with substrate. The active-site Proton donor is Y58. Residue 73–75 (GAA) participates in substrate binding. Residues 116–139 (ELGSDPAHAPEGSGLTSPRSLTFA) form a disordered region. Residues 129–139 (GLTSPRSLTFA) are compositionally biased toward polar residues.

Belongs to the PanD family. Heterooctamer of four alpha and four beta subunits. It depends on pyruvate as a cofactor. Post-translationally, is synthesized initially as an inactive proenzyme, which is activated by self-cleavage at a specific serine bond to produce a beta-subunit with a hydroxyl group at its C-terminus and an alpha-subunit with a pyruvoyl group at its N-terminus.

It is found in the cytoplasm. It catalyses the reaction L-aspartate + H(+) = beta-alanine + CO2. The protein operates within cofactor biosynthesis; (R)-pantothenate biosynthesis; beta-alanine from L-aspartate: step 1/1. Functionally, catalyzes the pyruvoyl-dependent decarboxylation of aspartate to produce beta-alanine. This is Aspartate 1-decarboxylase from Nocardia farcinica (strain IFM 10152).